The following is a 642-amino-acid chain: Triacylglycerol lipase 3 (642 aa).

In terms of domain architecture, PNPLA spans 204–392 (LILQGGSLFG…NEIEPFLNIN (189 aa)). The GXSXG motif lies at 235–239 (GSSMG). Ser-237 acts as the Nucleophile in catalysis. The HXXXXD acyltransferase motif motif lies at 298-303 (HGYSQD). Residue Glu-403 is the Proton acceptor of the active site. Positions 471–481 (RKTQRSSSQSP) are enriched in polar residues. Residues 471-502 (RKTQRSSSQSPIKAGTVEDLEPEPLMSPVPPS) are disordered.

The protein resides in the lipid droplet. It carries out the reaction a triacylglycerol + H2O = a diacylglycerol + a fatty acid + H(+). It catalyses the reaction 1,2,3-tri-(9Z-octadecenoyl)-glycerol + H2O = di-(9Z)-octadecenoylglycerol + (9Z)-octadecenoate + H(+). The catalysed reaction is di-(9Z)-octadecenoylglycerol + H2O = (9Z-octadecenoyl)-glycerol + (9Z)-octadecenoate + H(+). The enzyme catalyses a 1-acyl-sn-glycero-3-phosphoethanolamine + (9Z)-octadecenoyl-CoA = 1-acyl-2-(9Z)-octadecenoyl-sn-glycero-3-phosphoethanolamine + CoA. It carries out the reaction a 1-acyl-sn-glycero-3-phosphoethanolamine + hexadecanoyl-CoA = 1-acyl-2-hexadecanoyl-sn-glycero-3-phosphoethanolamine + CoA. With respect to regulation, loses its lipolytic activity in cells lacking nonpolar lipids. In terms of biological role, lipid particle-localized triacylglycerol (TAG) lipase. The lipid droplet/particle is a lipid storage compartment which serves as a depot of energy and building blocks for membrane lipid biosynthesis. Involved in the mobilization of the non-polar storage lipids triacylglycerols (TAGs) from lipid particles by hydrolysis of TAGs, releasing and supplying specific fatty acids to the appropriate metabolic pathways. Also catalyzes the acylation of lysophosphatidic acid (LPA). Important for efficient sporulation, but rather through its acyltransferase than lipase activity. The sequence is that of Triacylglycerol lipase 3 (TGL3) from Saccharomyces cerevisiae (strain ATCC 204508 / S288c) (Baker's yeast).